The chain runs to 964 residues: Protein HIRA (964 aa).

6 WD repeats span residues 10–50 (RHEG…KDNT), 64–103 (DHFG…GTSE), 123–162 (GHTA…CTAV), 165–204 (GHTS…LAHK), 259–331 (GHNA…PLFV), and 335–376 (FFSQ…HRLS). Residues 453–490 (SHEDSKKTAGPTADDVKKGNQLSSPVKQREYRRPDGRK) are disordered. Positions 479–490 (KQREYRRPDGRK) are enriched in basic and acidic residues. The stretch at 644-685 (LWSDRISGKVTVLAGNANFWAVGCEDGFLQVYTRCGVRAMPA) is one WD 7 repeat. Residues 920–940 (ASNRKVQRLLNEFMDLLLEYE) adopt a coiled-coil conformation.

This sequence belongs to the WD repeat HIR1 family. Interacts with RS2. As to expression, more abundant in apices and young leaf primordia than in fully expanded leaf tissues.

It localises to the nucleus. Histone chaperone involved in maintining knox genes silencing throughout leaf development. This is Protein HIRA from Zea mays (Maize).